Here is a 235-residue protein sequence, read N- to C-terminus: Probable septum site-determining protein MinC (235 aa).

Residues 104 to 125 (KAVRPAPVEPATPSEPPQNANP) are disordered. The span at 110–119 (PVEPATPSEP) shows a compositional bias: pro residues.

This sequence belongs to the MinC family. As to quaternary structure, interacts with MinD and FtsZ.

Cell division inhibitor that blocks the formation of polar Z ring septums. Rapidly oscillates between the poles of the cell to destabilize FtsZ filaments that have formed before they mature into polar Z rings. Prevents FtsZ polymerization. The protein is Probable septum site-determining protein MinC of Salmonella agona (strain SL483).